Consider the following 1172-residue polypeptide: Carbamoyl phosphate synthase arginine-specific large chain, chloroplastic (1172 aa).

The segment covering 1 to 10 (MATSLSSAPT) has biased composition (polar residues). The disordered stretch occupies residues 1–37 (MATSLSSAPTQLRPSPSPSHHRLLHRSSLLPFPRRHH). The N-terminal 50 residues, 1 to 50 (MATSLSSAPTQLRPSPSPSHHRLLHRSSLLPFPRRHHHRRRRCGALSIAR), are a transit peptide targeting the chloroplast. The carboxyphosphate synthetic domain stretch occupies residues 72-473 (GRLAGVRKIM…SFQKAVRSLE (402 aa)). 12 residues coordinate ATP: Arg-199, Arg-240, Gly-246, Gly-247, Lys-279, Leu-281, Glu-286, Gly-312, Val-313, His-314, Gln-356, and Glu-370. The ATP-grasp 1 domain occupies 203 to 399 (KQAMDRIGLK…IAKMAAKLSV (197 aa)). Mg(2+) is bound by residues Gln-356, Glu-370, and Asn-372. Residues 474–623 (TGFAGWGCAP…YSSYEYECES (150 aa)) are oligomerization domain. The tract at residues 624 to 1019 (VPTNKKKVLI…GAFAKAQIAA (396 aa)) is carbamoyl phosphate synthetic domain. The region spanning 761–954 (NAILEELGIE…LAKYASLVMS (194 aa)) is the ATP-grasp 2 domain. Positions 797, 836, 838, 843, 869, 870, 871, 872, 912, and 925 each coordinate ATP. Residues Gln-912, Glu-925, and Asn-927 each coordinate Mg(2+). The tract at residues 1020–1172 (GQKLPLNGTV…QNLQAAQSAS (153 aa)) is allosteric domain. The 142-residue stretch at 1021-1162 (QKLPLNGTVF…QDYFQTTDAS (142 aa)) folds into the MGS-like domain.

This sequence belongs to the CarB family. In terms of assembly, heterodimer composed of 2 chains; the small (or glutamine) chain promotes the hydrolysis of glutamine to ammonia, which is used by the large (or ammonia) chain to synthesize carbamoyl phosphate. The cofactor is Mg(2+). It depends on Mn(2+) as a cofactor.

It is found in the plastid. It localises to the chloroplast. It carries out the reaction hydrogencarbonate + L-glutamine + 2 ATP + H2O = carbamoyl phosphate + L-glutamate + 2 ADP + phosphate + 2 H(+). The catalysed reaction is hydrogencarbonate + NH4(+) + 2 ATP = carbamoyl phosphate + 2 ADP + phosphate + 2 H(+). It functions in the pathway amino-acid biosynthesis; L-arginine biosynthesis; carbamoyl phosphate from bicarbonate: step 1/1. Functionally, large subunit of the arginine-specific carbamoyl phosphate synthase (CPSase). CPSase catalyzes the formation of carbamoyl phosphate from the ammonia moiety of glutamine, hydrogencarbonate, and phosphate donated by ATP, constituting the first step of 2 biosynthetic pathways, one leading to arginine and/or urea and the other to pyrimidine nucleotides. The large subunit (synthetase) binds the substrates ammonia (free or transferred from glutamine from the small subunit), hydrogencarbonate and ATP and carries out an ATP-coupled ligase reaction, activating hydrogencarbonate by forming carboxy phosphate which reacts with ammonia to form carbamoyl phosphate. The sequence is that of Carbamoyl phosphate synthase arginine-specific large chain, chloroplastic (CARB) from Oryza sativa subsp. japonica (Rice).